The primary structure comprises 260 residues: Acetylglutamate kinase (260 aa).

Substrate contacts are provided by residues 45 to 46 (GG), arginine 67, and asparagine 159.

Belongs to the acetylglutamate kinase family. ArgB subfamily.

It is found in the cytoplasm. The enzyme catalyses N-acetyl-L-glutamate + ATP = N-acetyl-L-glutamyl 5-phosphate + ADP. It functions in the pathway amino-acid biosynthesis; L-arginine biosynthesis; N(2)-acetyl-L-ornithine from L-glutamate: step 2/4. In terms of biological role, catalyzes the ATP-dependent phosphorylation of N-acetyl-L-glutamate. This chain is Acetylglutamate kinase, found in Aliivibrio fischeri (strain ATCC 700601 / ES114) (Vibrio fischeri).